The chain runs to 215 residues: Vesicle-trafficking protein SEC22b-B (215 aa).

At 1 to 190 the chain is on the cytoplasmic side; the sequence is MVLLTMIARL…RSDAKYLNTR (190 aa). Positions 6-119 constitute a Longin domain; it reads MIARLADGLP…YSFIEFDTYI (114 aa). The v-SNARE coiled-coil homology domain occupies 134–194; sequence NLSNINTELQ…KYLNTRSTYA (61 aa). Residues 191–213 form a helical membrane-spanning segment; sequence STYAKLAAGGVFFIMLIVYIRFW. The Lumenal segment spans residues 214 to 215; that stretch reads WL.

This sequence belongs to the synaptobrevin family. As to quaternary structure, component of 2 distinct SNARE complexes.

The protein localises to the endoplasmic reticulum membrane. Its subcellular location is the endoplasmic reticulum-Golgi intermediate compartment membrane. It localises to the golgi apparatus. The protein resides in the cis-Golgi network membrane. It is found in the trans-Golgi network membrane. The protein localises to the melanosome. In terms of biological role, SNARE involved in targeting and fusion of ER-derived transport vesicles with the Golgi complex as well as Golgi-derived retrograde transport vesicles with the ER. The polypeptide is Vesicle-trafficking protein SEC22b-B (Danio rerio (Zebrafish)).